Consider the following 177-residue polypeptide: MNHPRSIAMLAALWLVVSVTSTPVRRSPDLEARRRSAIDRSMIRFGRSTLPVVPPAQPSFLQRYSAPQPAALTADDLMTFLRAYEEDYSSPVSKKSASFVRFGRDPSFIRFGRSVDEENSGYQAETNTYPQRRHRARNHFIRLGRDNELSESNDEDRYEVESERTKRSVVDPCNDCA.

The N-terminal stretch at 1–21 (MNHPRSIAMLAALWLVVSVTS) is a signal peptide. Positions 22 to 32 (TPVRRSPDLEA) are excised as a propeptide. Phenylalanine amide is present on phenylalanine 45. The propeptide occupies 47 to 93 (RSTLPVVPPAQPSFLQRYSAPQPAALTADDLMTFLRAYEEDYSSPVS). Phenylalanine amide is present on residues phenylalanine 102 and phenylalanine 111. A propeptide spanning residues 113 to 131 (RSVDEENSGYQAETNTYPQ) is cleaved from the precursor. At leucine 143 the chain carries Leucine amide. A propeptide spanning residues 145–177 (RDNELSESNDEDRYEVESERTKRSVVDPCNDCA) is cleaved from the precursor. The interval 145–177 (RDNELSESNDEDRYEVESERTKRSVVDPCNDCA) is disordered. Over residues 149–158 (LSESNDEDRY) the composition is skewed to acidic residues. Over residues 159–169 (EVESERTKRSV) the composition is skewed to basic and acidic residues.

It belongs to the FARP (FMRFamide related peptide) family. As to expression, only expressed in the CNS and predominantly in the thoracic ganglia. Strongest expression is seen in two pairs of large neurons in each thoracic ganglion. These neurons are ventrolateral neurosecretory cells 1 and 2, they project their axons through transverse nerves into the periphery where axons from the prothoracic ganglion innervate the prothoracic gland.

It localises to the secreted. Its function is as follows. Regulates ecdysteroidogenesis by direct innervation of the prothoracic gland by reducing cAMP production via the receptor for myosuppressin. The neurons that innervate the prothoracic gland during the fifth instar are most active during days 0-4, after which they reduce and then peak again on day 6. Expression suppresses the biosynthesis of steroid hormones called ecdysteroids that elicit molting and metamorphosis. The protein is FMRFamide-related peptides of Bombyx mori (Silk moth).